A 331-amino-acid chain; its full sequence is Putative serine/threonine-protein kinase ZK507.1 (331 aa).

In terms of domain architecture, Protein kinase spans 1-270; it reads MKVNEEGFAI…CKLTLKEPLV (270 aa). The Proton acceptor role is filled by Asp-116. The span at 302–314 shows a compositional bias: basic and acidic residues; sequence SDRNEENSLDRSK. A disordered region spans residues 302–331; it reads SDRNEENSLDRSKTGTLSFNNSKNKKPSRY.

The protein belongs to the protein kinase superfamily. Ser/Thr protein kinase family.

The enzyme catalyses L-seryl-[protein] + ATP = O-phospho-L-seryl-[protein] + ADP + H(+). The catalysed reaction is L-threonyl-[protein] + ATP = O-phospho-L-threonyl-[protein] + ADP + H(+). The protein is Putative serine/threonine-protein kinase ZK507.1 of Caenorhabditis elegans.